Consider the following 319-residue polypeptide: Insulin gene enhancer protein ISL-2 (319 aa).

2 consecutive LIM zinc-binding domains span residues F1–D43 and C52–H106. Disordered regions lie at residues H106–T151, Q218–G237, and E286–T319. The homeobox DNA-binding region spans T150–S209. Residues Q218–T230 are compositionally biased toward polar residues. A compositionally biased stretch (low complexity) spans E286–S303. Positions Q304–T319 are enriched in polar residues.

The protein resides in the nucleus. Its function is as follows. Transcriptional factor that defines subclasses of motoneurons that segregate into columns in the spinal cord and select distinct axon pathways. Acts in conjunction with LIM-1, LIM-3 and ISL-1. This Gallus gallus (Chicken) protein is Insulin gene enhancer protein ISL-2 (ISL2).